Consider the following 404-residue polypeptide: MSKVNKVVLAYSGGLDTSVIVKWLQENYDCEVVTFTADIGQGEEVEPARAKAEKLGVKQIFIEDLREEFARDFVFPMFRANTIYEGEYLLGTSIARPLIAKRLVEIANETGADAISHGATGKGNDQVRFELGAYALKPGIKVIAPWREWDLTSREKLLTYCDTHDIAVEKKKGKSPYSMDANLLHISYEGGILEDPWEEAEEDMWRWSVSPEAAPDQATYLELTYQNGDIVAIDGEALAPHEVIERLNKVGGVNGVGRLDIVENRYVGMKSRGCYETPGGTIMLRAHRAIESITLDKELAHLKDSLMPKYAELIYNGYWWSPERLALQKLIDESQQHVNGVVRVKLYKGNVIVAGRKSEDSLFDDRIATFEDDGGVYNQRDAEGFIKLNALRMRIAADKGRSMK.

ATP-binding positions include 10-18 and Ala37; that span reads AYSGGLDTS. The L-citrulline site is built by Tyr88 and Ser93. Gly118 is a binding site for ATP. L-aspartate is bound by residues Thr120, Asn124, and Asp125. Asn124 contributes to the L-citrulline binding site. L-citrulline is bound by residues Arg128, Ser178, Ser187, Glu263, and Tyr275.

It belongs to the argininosuccinate synthase family. Type 1 subfamily. As to quaternary structure, homotetramer.

The protein resides in the cytoplasm. It carries out the reaction L-citrulline + L-aspartate + ATP = 2-(N(omega)-L-arginino)succinate + AMP + diphosphate + H(+). Its pathway is amino-acid biosynthesis; L-arginine biosynthesis; L-arginine from L-ornithine and carbamoyl phosphate: step 2/3. The protein is Argininosuccinate synthase of Hahella chejuensis (strain KCTC 2396).